Reading from the N-terminus, the 172-residue chain is Transmembrane protein 91 (172 aa).

Disordered stretches follow at residues 1–31 (MDSP…RHEL) and 55–83 (PSVS…DWDG). Residues 1-97 (MDSPSLRELQ…SPFLPHDHLG (97 aa)) lie on the Extracellular side of the membrane. Residues 69 to 81 (VEDMSSSDSDSDW) are compositionally biased toward acidic residues. The chain crosses the membrane as a helical span at residues 98 to 118 (LAVFSMLCCFWPVGIAAFCLA). Residues 119-139 (QKTNKAWAKGDIQGAGAASRR) are Cytoplasmic-facing. Residues 140 to 160 (AFLLGVLAVGLGVCTYAAALV) traverse the membrane as a helical segment. Residues 161-172 (TLAAYLASRDPP) lie on the Extracellular side of the membrane.

It belongs to the CD225/Dispanin family.

The protein resides in the membrane. This is Transmembrane protein 91 (TMEM91) from Homo sapiens (Human).